Here is a 176-residue protein sequence, read N- to C-terminus: Conjugal transfer protein TraF (176 aa).

A signal peptide spans 1–23; it reads MRHRRALLFLTGAAVFVSALTAA.

The protein belongs to the peptidase S26C family.

Its subcellular location is the periplasm. Involved in conjugal transfer of the plasmid. The polypeptide is Conjugal transfer protein TraF (traF) (Agrobacterium tumefaciens (strain 15955)).